The primary structure comprises 816 residues: Leucine--tRNA ligase (816 aa).

The short motif at 40–51 (PYPSGSGLHVGH) is the 'HIGH' region element. A 'KMSKS' region motif is present at residues 576 to 580 (KMSKS). Residue Lys579 coordinates ATP.

It belongs to the class-I aminoacyl-tRNA synthetase family.

It localises to the cytoplasm. The enzyme catalyses tRNA(Leu) + L-leucine + ATP = L-leucyl-tRNA(Leu) + AMP + diphosphate. The chain is Leucine--tRNA ligase from Chlorobium phaeobacteroides (strain DSM 266 / SMG 266 / 2430).